The sequence spans 444 residues: Ribosomal protein uS12 methylthiotransferase RimO (444 aa).

Residues Pro2 to Glu118 form the MTTase N-terminal domain. Residues Cys11, Cys47, Cys81, Cys156, Cys160, and Cys163 each contribute to the [4Fe-4S] cluster site. The 231-residue stretch at Ser142–Ser372 folds into the Radical SAM core domain. The TRAM domain maps to Gln375 to Gln444.

Belongs to the methylthiotransferase family. RimO subfamily. [4Fe-4S] cluster serves as cofactor.

The protein localises to the cytoplasm. The catalysed reaction is L-aspartate(89)-[ribosomal protein uS12]-hydrogen + (sulfur carrier)-SH + AH2 + 2 S-adenosyl-L-methionine = 3-methylsulfanyl-L-aspartate(89)-[ribosomal protein uS12]-hydrogen + (sulfur carrier)-H + 5'-deoxyadenosine + L-methionine + A + S-adenosyl-L-homocysteine + 2 H(+). Functionally, catalyzes the methylthiolation of an aspartic acid residue of ribosomal protein uS12. This Desulforamulus reducens (strain ATCC BAA-1160 / DSM 100696 / MI-1) (Desulfotomaculum reducens) protein is Ribosomal protein uS12 methylthiotransferase RimO.